The sequence spans 380 residues: 3-dehydroquinate synthase (380 aa).

It belongs to the archaeal-type DHQ synthase family.

The catalysed reaction is 2-amino-2,3,7-trideoxy-D-lyxo-hept-6-ulosonate + NAD(+) + H2O = 3-dehydroquinate + NH4(+) + NADH + H(+). Functionally, catalyzes the oxidative deamination and cyclization of 2-amino-3,7-dideoxy-D-threo-hept-6-ulosonic acid (ADH) to yield 3-dehydroquinate (DHQ), which is fed into the canonical shikimic pathway of aromatic amino acid biosynthesis. This chain is 3-dehydroquinate synthase, found in Methanosarcina barkeri (strain Fusaro / DSM 804).